A 463-amino-acid chain; its full sequence is Phosphoglucosamine mutase (463 aa).

Serine 110 functions as the Phosphoserine intermediate in the catalytic mechanism. Serine 110, aspartate 255, aspartate 257, and aspartate 259 together coordinate Mg(2+). At serine 110 the chain carries Phosphoserine.

Belongs to the phosphohexose mutase family. The cofactor is Mg(2+). Post-translationally, activated by phosphorylation.

It carries out the reaction alpha-D-glucosamine 1-phosphate = D-glucosamine 6-phosphate. Its function is as follows. Catalyzes the conversion of glucosamine-6-phosphate to glucosamine-1-phosphate. The polypeptide is Phosphoglucosamine mutase (Koribacter versatilis (strain Ellin345)).